The following is a 615-amino-acid chain: DNA mismatch repair protein MutL (615 aa).

A disordered region spans residues 362–397; that stretch reads HFAEPAVREPVAPRYSPAPASGSRPAASWPNAQPGY. Low complexity predominate over residues 373-391; it reads APRYSPAPASGSRPAASWP.

Belongs to the DNA mismatch repair MutL/HexB family.

This protein is involved in the repair of mismatches in DNA. It is required for dam-dependent methyl-directed DNA mismatch repair. May act as a 'molecular matchmaker', a protein that promotes the formation of a stable complex between two or more DNA-binding proteins in an ATP-dependent manner without itself being part of a final effector complex. This Escherichia coli O6:H1 (strain CFT073 / ATCC 700928 / UPEC) protein is DNA mismatch repair protein MutL.